A 417-amino-acid chain; its full sequence is Glutamyl-tRNA reductase (417 aa).

Residues 49 to 52, Ser-107, 112 to 114, and Gln-118 contribute to the substrate site; these read TCNR and EEQ. Residue Cys-50 is the Nucleophile of the active site. NADP(+) is bound at residue 187–192; that stretch reads GTGEVS.

This sequence belongs to the glutamyl-tRNA reductase family. In terms of assembly, homodimer.

It carries out the reaction (S)-4-amino-5-oxopentanoate + tRNA(Glu) + NADP(+) = L-glutamyl-tRNA(Glu) + NADPH + H(+). It functions in the pathway porphyrin-containing compound metabolism; protoporphyrin-IX biosynthesis; 5-aminolevulinate from L-glutamyl-tRNA(Glu): step 1/2. Catalyzes the NADPH-dependent reduction of glutamyl-tRNA(Glu) to glutamate 1-semialdehyde (GSA). The polypeptide is Glutamyl-tRNA reductase (Cenarchaeum symbiosum (strain A)).